Consider the following 106-residue polypeptide: UPF0145 protein BDI_2732 (106 aa).

This sequence belongs to the UPF0145 family.

This is UPF0145 protein BDI_2732 from Parabacteroides distasonis (strain ATCC 8503 / DSM 20701 / CIP 104284 / JCM 5825 / NCTC 11152).